A 316-amino-acid chain; its full sequence is Cytochrome c biogenesis protein CcsA (316 aa).

8 consecutive transmembrane segments (helical) span residues 19–39 (VLTL…FSFW), 47–67 (SSIV…QLVF), 77–97 (ISNL…IQLL), 106–126 (LIQA…SFVL), 151–171 (VIMC…VVLL), 224–244 (TITF…VWAN), 258–275 (TWAF…HTRL), and 285–305 (AIIA…VNFL).

This sequence belongs to the CcmF/CycK/Ccl1/NrfE/CcsA family. As to quaternary structure, may interact with ccs1.

The protein resides in the cellular thylakoid membrane. Required during biogenesis of c-type cytochromes (cytochrome c6 and cytochrome f) at the step of heme attachment. The sequence is that of Cytochrome c biogenesis protein CcsA from Prochlorococcus marinus (strain SARG / CCMP1375 / SS120).